The primary structure comprises 121 residues: Large ribosomal subunit protein bL17 (121 aa).

The protein belongs to the bacterial ribosomal protein bL17 family. In terms of assembly, part of the 50S ribosomal subunit. Contacts protein L32.

In Rubrobacter xylanophilus (strain DSM 9941 / JCM 11954 / NBRC 16129 / PRD-1), this protein is Large ribosomal subunit protein bL17.